The primary structure comprises 235 residues: Ribonuclease 3 (235 aa).

In terms of domain architecture, RNase III spans 7–131 (LSALEARIGH…IIGAVFLDGG (125 aa)). Mg(2+) is bound at residue glutamate 45. Aspartate 49 is a catalytic residue. Aspartate 117 and glutamate 120 together coordinate Mg(2+). Glutamate 120 is a catalytic residue. The region spanning 156–225 (DPKTTLQEWA…AAAFLTREKI (70 aa)) is the DRBM domain.

Belongs to the ribonuclease III family. As to quaternary structure, homodimer. The cofactor is Mg(2+).

It is found in the cytoplasm. It catalyses the reaction Endonucleolytic cleavage to 5'-phosphomonoester.. Digests double-stranded RNA. Involved in the processing of primary rRNA transcript to yield the immediate precursors to the large and small rRNAs (23S and 16S). Processes some mRNAs, and tRNAs when they are encoded in the rRNA operon. Processes pre-crRNA and tracrRNA of type II CRISPR loci if present in the organism. The polypeptide is Ribonuclease 3 (Methylocella silvestris (strain DSM 15510 / CIP 108128 / LMG 27833 / NCIMB 13906 / BL2)).